Reading from the N-terminus, the 142-residue chain is FAD synthase (142 aa).

Residues Thr-9–Phe-10, His-14–His-17, and Asp-92 contribute to the ATP site.

Belongs to the archaeal FAD synthase family. In terms of assembly, homodimer. A divalent metal cation is required as a cofactor.

The enzyme catalyses FMN + ATP + H(+) = FAD + diphosphate. It participates in cofactor biosynthesis; FAD biosynthesis; FAD from FMN: step 1/1. Catalyzes the transfer of the AMP portion of ATP to flavin mononucleotide (FMN) to produce flavin adenine dinucleotide (FAD) coenzyme. The chain is FAD synthase from Haloferax volcanii (strain ATCC 29605 / DSM 3757 / JCM 8879 / NBRC 14742 / NCIMB 2012 / VKM B-1768 / DS2) (Halobacterium volcanii).